Consider the following 306-residue polypeptide: Ribonuclease Z (306 aa).

His63, His65, Asp67, His68, His141, Asp211, and His269 together coordinate Zn(2+). Asp67 (proton acceptor) is an active-site residue.

The protein belongs to the RNase Z family. In terms of assembly, homodimer. It depends on Zn(2+) as a cofactor.

It carries out the reaction Endonucleolytic cleavage of RNA, removing extra 3' nucleotides from tRNA precursor, generating 3' termini of tRNAs. A 3'-hydroxy group is left at the tRNA terminus and a 5'-phosphoryl group is left at the trailer molecule.. Its function is as follows. Zinc phosphodiesterase, which displays some tRNA 3'-processing endonuclease activity. Probably involved in tRNA maturation, by removing a 3'-trailer from precursor tRNA. The sequence is that of Ribonuclease Z from Staphylococcus epidermidis (strain ATCC 12228 / FDA PCI 1200).